Reading from the N-terminus, the 729-residue chain is MSKFIEPSIEEIKLEKLYQDMGLSDAEYNKVCEILGREPNFTEVGIFSVMWSEHCSYKHSKPFLKQFPTTGEHVLMGPGEGAGVVDIGDNQAVVFKVESHNHPSAIEPYQGAATGVGGIIRDIVSIGARPINLLNSLRFGELSVKQNQRLLKGVVRGIGGYGNCIGIPTTAGEIEFDDRYDGNPLVNAMCVGVIDHDMIQKGTAKGEGNSVIYVGLKTGRDGIHGATFASEELTEESESKRPSVQIGDPFVGKKLMEATLEAITFDELVGIQDMGAAGLTSSSSEMAAKGGSGLELHLDQVPTREPGISPYEMMLSETQERMLLVVEKGTEQKFLDLFEKHELDSAVIGEVTNTDRFVLKYEDEVFADIPVQSLADEAPVYVLEGEEKEYNTSKNDYSSINVEETFKKLLIHPTIASKHYLYEQYDQQVGANTIIKPGLQSSVVRVEGTNKAVASTIDGEARYVFNQPYEGGKMVVAEAYRNLIAVGATPLAMTDCLNYGSPEKKEIYQQLIDSTKGMSEACEVLKTPVVSGNVSLYNETRGTSIFPTPVVGMVGLIEDIDYLKDFHPEAGHKLYLVGETRDDFGGSQVEKLLYGKVNHEFEAIDLSDEVNKGEAVKNTIRSGVASHVQTVGKGGLLITLARISAHYGLGLEASIDLSDAQLFSETQGRYIIVVKEGQTLNIDEAIEIGQLTDVDEFKVTNAQSSIVEKVSEIKESWEGAIAQCLTTVD.

His54 is a catalytic residue. Tyr57 and Lys96 together coordinate ATP. Glu98 is a Mg(2+) binding site. Residues 99-102 (SHNH) and Arg121 each bind substrate. Residue His100 is the Proton acceptor of the active site. Asp122 contacts Mg(2+). Substrate is bound at residue Gln245. Asp273 provides a ligand contact to Mg(2+). 317–319 (ETQ) is a binding site for substrate. The ATP site is built by Asp495 and Gly532. A Mg(2+)-binding site is contributed by Asn533. Substrate is bound at residue Ser535.

Belongs to the FGAMS family. As to quaternary structure, monomer. Part of the FGAM synthase complex composed of 1 PurL, 1 PurQ and 2 PurS subunits.

The protein localises to the cytoplasm. It catalyses the reaction N(2)-formyl-N(1)-(5-phospho-beta-D-ribosyl)glycinamide + L-glutamine + ATP + H2O = 2-formamido-N(1)-(5-O-phospho-beta-D-ribosyl)acetamidine + L-glutamate + ADP + phosphate + H(+). It participates in purine metabolism; IMP biosynthesis via de novo pathway; 5-amino-1-(5-phospho-D-ribosyl)imidazole from N(2)-formyl-N(1)-(5-phospho-D-ribosyl)glycinamide: step 1/2. In terms of biological role, part of the phosphoribosylformylglycinamidine synthase complex involved in the purines biosynthetic pathway. Catalyzes the ATP-dependent conversion of formylglycinamide ribonucleotide (FGAR) and glutamine to yield formylglycinamidine ribonucleotide (FGAM) and glutamate. The FGAM synthase complex is composed of three subunits. PurQ produces an ammonia molecule by converting glutamine to glutamate. PurL transfers the ammonia molecule to FGAR to form FGAM in an ATP-dependent manner. PurS interacts with PurQ and PurL and is thought to assist in the transfer of the ammonia molecule from PurQ to PurL. The polypeptide is Phosphoribosylformylglycinamidine synthase subunit PurL (Staphylococcus haemolyticus (strain JCSC1435)).